We begin with the raw amino-acid sequence, 440 residues long: Thymidine phosphorylase (440 aa).

It belongs to the thymidine/pyrimidine-nucleoside phosphorylase family. In terms of assembly, homodimer.

The catalysed reaction is thymidine + phosphate = 2-deoxy-alpha-D-ribose 1-phosphate + thymine. It participates in pyrimidine metabolism; dTMP biosynthesis via salvage pathway; dTMP from thymine: step 1/2. In terms of biological role, the enzymes which catalyze the reversible phosphorolysis of pyrimidine nucleosides are involved in the degradation of these compounds and in their utilization as carbon and energy sources, or in the rescue of pyrimidine bases for nucleotide synthesis. The protein is Thymidine phosphorylase of Salmonella paratyphi A (strain ATCC 9150 / SARB42).